A 418-amino-acid polypeptide reads, in one-letter code: Gamma-glutamyl phosphate reductase (418 aa).

It belongs to the gamma-glutamyl phosphate reductase family.

Its subcellular location is the cytoplasm. The enzyme catalyses L-glutamate 5-semialdehyde + phosphate + NADP(+) = L-glutamyl 5-phosphate + NADPH + H(+). The protein operates within amino-acid biosynthesis; L-proline biosynthesis; L-glutamate 5-semialdehyde from L-glutamate: step 2/2. Functionally, catalyzes the NADPH-dependent reduction of L-glutamate 5-phosphate into L-glutamate 5-semialdehyde and phosphate. The product spontaneously undergoes cyclization to form 1-pyrroline-5-carboxylate. This Desulfatibacillum aliphaticivorans protein is Gamma-glutamyl phosphate reductase.